The primary structure comprises 148 residues: Single-stranded DNA-binding protein 2 (148 aa).

Positions 6-108 (MNHITVSGLV…IEAESFGHDL (103 aa)) constitute an SSB domain.

In terms of assembly, homotetramer.

The chain is Single-stranded DNA-binding protein 2 (ssb2) from Tropheryma whipplei (strain TW08/27) (Whipple's bacillus).